A 249-amino-acid chain; its full sequence is 3alpha-hydroxy bile acid-CoA-ester 3-dehydrogenase 1/3 (249 aa).

NAD(+) is bound by residues 15-18 (TRGI), Glu38, Glu42, and Asn92. Residue Ser144 coordinates substrate. Active-site proton donor/acceptor residues include Tyr157 and Lys161. NAD(+) contacts are provided by residues Lys161 and 190 to 192 (VDT).

It belongs to the short-chain dehydrogenases/reductases (SDR) family. Homotetramer.

The catalysed reaction is a 3alpha-hydroxy bile acid CoA + NAD(+) = a 3-oxo bile acid CoA + NADH + H(+). It carries out the reaction choloyl-CoA + NAD(+) = 7alpha,12alpha-dihydroxy-3-oxochol-24-oyl-CoA + NADH + H(+). It catalyses the reaction chenodeoxycholoyl-CoA + NAD(+) = 7alpha-hydroxy-3-oxochol-24-oyl-CoA + NADH + H(+). The enzyme catalyses deoxycholoyl-CoA + NAD(+) = 12alpha-hydroxy-3-oxocholan-24-oyl-CoA + NADH + H(+). The catalysed reaction is lithocholoyl-CoA + NAD(+) = 3-oxocholan-24-oyl-CoA + NADH + H(+). It functions in the pathway lipid metabolism; bile acid biosynthesis. Involved in the multi-step bile acid 7alpha-dehydroxylation pathway that transforms primary bile acids to secondary bile acids in the human gut. Catalyzes the oxidation of C3-hydroxyl group of CoA conjugated bile acids generating a C3-oxo bile acid intermediate. Can use choloyl-CoA, chenodeoxycholoyl-CoA, deoxycholoyl-CoA, and lithocholoyl-CoA as substrates with similar efficiency. Highly prefers NAD over NADP as cosubstrate. Also catalyzes the reverse reactions; in vitro, the preferred direction of reaction depends on the pH. Has very little activity with unconjugated (non-CoA) bile acid substrates. The polypeptide is 3alpha-hydroxy bile acid-CoA-ester 3-dehydrogenase 1/3 (baiA1) (Clostridium scindens (strain JCM 10418 / VPI 12708)).